Reading from the N-terminus, the 264-residue chain is MDTRPIGFLDSGVGGLTVVCELIRQLPHEKIVYIGDSARAPYGPRPKKQIKEYTWELVNFLLTQNVKMIVFACNTATAVAWEEVKAALDIPVLGVVLPGASAAIKSTTKGQVGVIGTPMTVASDIYRKKIQLLAPSVQVRSLACPKFVPIVESNEMCSSIAKKIVYDSLSPLVGKIDTLVLGCTHYPLLRPIIQNVMGPSVKLIDSGAECVRDISVLLNYFDINGNYHQKAVEHRFFTTANPEIFQEIASIWLKQKINVEHVTL.

Substrate-binding positions include 10–11 and 42–43; these read DS and YG. Cys-73 acts as the Proton donor/acceptor in catalysis. 74-75 is a substrate binding site; that stretch reads NT. Cys-183 acts as the Proton donor/acceptor in catalysis. 184-185 is a binding site for substrate; it reads TH.

The protein belongs to the aspartate/glutamate racemases family.

It catalyses the reaction L-glutamate = D-glutamate. The protein operates within cell wall biogenesis; peptidoglycan biosynthesis. Its function is as follows. Provides the (R)-glutamate required for cell wall biosynthesis. The sequence is that of Glutamate racemase from Streptococcus pyogenes serotype M18 (strain MGAS8232).